The chain runs to 273 residues: Ribosomal RNA small subunit methyltransferase A (273 aa).

S-adenosyl-L-methionine is bound by residues N18, L20, G45, E66, D91, and N113.

The protein belongs to the class I-like SAM-binding methyltransferase superfamily. rRNA adenine N(6)-methyltransferase family. RsmA subfamily.

Its subcellular location is the cytoplasm. It carries out the reaction adenosine(1518)/adenosine(1519) in 16S rRNA + 4 S-adenosyl-L-methionine = N(6)-dimethyladenosine(1518)/N(6)-dimethyladenosine(1519) in 16S rRNA + 4 S-adenosyl-L-homocysteine + 4 H(+). Specifically dimethylates two adjacent adenosines (A1518 and A1519) in the loop of a conserved hairpin near the 3'-end of 16S rRNA in the 30S particle. May play a critical role in biogenesis of 30S subunits. The polypeptide is Ribosomal RNA small subunit methyltransferase A (Escherichia coli O139:H28 (strain E24377A / ETEC)).